A 605-amino-acid polypeptide reads, in one-letter code: Elongation factor 4 (605 aa).

In terms of domain architecture, tr-type G spans 9–192 (GMIRNFCIIA…AIVARVPAPA (184 aa)). GTP-binding positions include 21–26 (DHGKST) and 139–142 (NKID).

The protein belongs to the TRAFAC class translation factor GTPase superfamily. Classic translation factor GTPase family. LepA subfamily.

The protein resides in the cell inner membrane. The enzyme catalyses GTP + H2O = GDP + phosphate + H(+). Required for accurate and efficient protein synthesis under certain stress conditions. May act as a fidelity factor of the translation reaction, by catalyzing a one-codon backward translocation of tRNAs on improperly translocated ribosomes. Back-translocation proceeds from a post-translocation (POST) complex to a pre-translocation (PRE) complex, thus giving elongation factor G a second chance to translocate the tRNAs correctly. Binds to ribosomes in a GTP-dependent manner. The protein is Elongation factor 4 of Chlorobaculum tepidum (strain ATCC 49652 / DSM 12025 / NBRC 103806 / TLS) (Chlorobium tepidum).